The following is a 221-amino-acid chain: Putative adhesin P1-like protein MPN_131 (221 aa).

The span at 13–36 shows a compositional bias: low complexity; it reads RYGNNHRGSNSSTSGVTTQGQSQN. Disordered regions lie at residues 13–51 and 90–183; these read RYGN…NVGV and GWRN…TPSG. A compositionally biased stretch (polar residues) spans 37 to 48; it reads ASSNEPAPTFSN. Positions 130 to 139 are enriched in basic and acidic residues; the sequence is LKQDKADKSG. Polar residues-rich tracts occupy residues 149–160 and 174–183; these read SGDNLTNYTNLP and HSPTRTTPSG.

This sequence belongs to the adhesin P1 family.

This chain is Putative adhesin P1-like protein MPN_131, found in Mycoplasma pneumoniae (strain ATCC 29342 / M129 / Subtype 1) (Mycoplasmoides pneumoniae).